The chain runs to 240 residues: Small ribosomal subunit protein uS3 (240 aa).

A KH type-2 domain is found at 21–92 (LNEFFTRELA…TIVLYAERVQ (72 aa)). Thr-44 and Thr-70 each carry phosphothreonine. Position 97 is a phosphoserine (Ser-97). A Glycyl lysine isopeptide (Lys-Gly) (interchain with G-Cter in ubiquitin) cross-link involves residue Lys-106. A Phosphoserine modification is found at Ser-129. Glycyl lysine isopeptide (Lys-Gly) (interchain with G-Cter in ubiquitin) cross-links involve residues Lys-132 and Lys-141. At Arg-146 the chain carries Omega-N-methylarginine; by SFM1. Residues Lys-151, Lys-200, and Lys-212 each participate in a glycyl lysine isopeptide (Lys-Gly) (interchain with G-Cter in ubiquitin) cross-link. Residues 212 to 240 (KEEEPILAPSVKDYRPAEETEAQAEPVEA) are disordered. A Phosphoserine modification is found at Ser-221. Positions 230 to 240 (ETEAQAEPVEA) are enriched in acidic residues. A Phosphothreonine modification is found at Thr-231.

Belongs to the universal ribosomal protein uS3 family. Component of the small ribosomal subunit (SSU). Mature yeast ribosomes consist of a small (40S) and a large (60S) subunit. The 40S small subunit contains 1 molecule of ribosomal RNA (18S rRNA) and 33 different proteins (encoded by 57 genes). The large 60S subunit contains 3 rRNA molecules (25S, 5.8S and 5S rRNA) and 46 different proteins (encoded by 81 genes). Ubiquitinated at Lys-212 in response to stalled ribosomes. Ubiquitination leads to activation of the No-Go Decay (NGD) pathway and degradation of non-functional 18S rRNA: first monoubiquitinated at Lys-212 by MAG2, followed by formation of 'Lys-63'-linked polyubiquitin chains on monoubiquitin by HEL2 and RSP5.

It is found in the cytoplasm. Its function is as follows. Component of the ribosome, a large ribonucleoprotein complex responsible for the synthesis of proteins in the cell. The small ribosomal subunit (SSU) binds messenger RNAs (mRNAs) and translates the encoded message by selecting cognate aminoacyl-transfer RNA (tRNA) molecules. The large subunit (LSU) contains the ribosomal catalytic site termed the peptidyl transferase center (PTC), which catalyzes the formation of peptide bonds, thereby polymerizing the amino acids delivered by tRNAs into a polypeptide chain. The nascent polypeptides leave the ribosome through a tunnel in the LSU and interact with protein factors that function in enzymatic processing, targeting, and the membrane insertion of nascent chains at the exit of the ribosomal tunnel. The chain is Small ribosomal subunit protein uS3 from Saccharomyces cerevisiae (strain ATCC 204508 / S288c) (Baker's yeast).